The primary structure comprises 332 residues: Ketol-acid reductoisomerase (NADP(+)) (332 aa).

Residues 1 to 182 enclose the KARI N-terminal Rossmann domain; it reads MAVIYYDKDC…GSNRAGILET (182 aa). NADP(+)-binding positions include 25–28 and 83–86; these read YGAQ and DTSQ. Residue His108 is part of the active site. Gly134 provides a ligand contact to NADP(+). The region spanning 183 to 328 is the KARI C-terminal knotted domain; that stretch reads TFAEETETDL…AELRSMMSWL (146 aa). Mg(2+) contacts are provided by Asp191, Glu195, Glu227, and Glu231. Ser252 contributes to the substrate binding site.

This sequence belongs to the ketol-acid reductoisomerase family. Mg(2+) serves as cofactor.

The catalysed reaction is (2R)-2,3-dihydroxy-3-methylbutanoate + NADP(+) = (2S)-2-acetolactate + NADPH + H(+). The enzyme catalyses (2R,3R)-2,3-dihydroxy-3-methylpentanoate + NADP(+) = (S)-2-ethyl-2-hydroxy-3-oxobutanoate + NADPH + H(+). Its pathway is amino-acid biosynthesis; L-isoleucine biosynthesis; L-isoleucine from 2-oxobutanoate: step 2/4. The protein operates within amino-acid biosynthesis; L-valine biosynthesis; L-valine from pyruvate: step 2/4. Involved in the biosynthesis of branched-chain amino acids (BCAA). Catalyzes an alkyl-migration followed by a ketol-acid reduction of (S)-2-acetolactate (S2AL) to yield (R)-2,3-dihydroxy-isovalerate. In the isomerase reaction, S2AL is rearranged via a Mg-dependent methyl migration to produce 3-hydroxy-3-methyl-2-ketobutyrate (HMKB). In the reductase reaction, this 2-ketoacid undergoes a metal-dependent reduction by NADPH to yield (R)-2,3-dihydroxy-isovalerate. This Dehalococcoides mccartyi (strain CBDB1) protein is Ketol-acid reductoisomerase (NADP(+)).